A 475-amino-acid polypeptide reads, in one-letter code: Ankyrin repeat, SAM and basic leucine zipper domain-containing protein 1 (475 aa).

A disordered region spans residues 1-23; sequence MAAARFRGLAVAGGGESSESEDD. Residues S17, S18, and S20 each carry the phosphoserine modification. ANK repeat units lie at residues 45 to 74, 78 to 107, 110 to 144, 148 to 177, 181 to 210, and 214 to 243; these read EKNE…SVDS, YGWT…KASF, DKQT…DPNV, RLMT…EVNT, NGYT…NKML, and DGKT…PLEG. The SAM domain maps to 272–334; that stretch reads SYTAFGDLEI…KILAALKELE (63 aa).

Interacts with DDX4, PIWIL1, RANBP9 and TDRD1.

The protein resides in the cytoplasm. Its function is as follows. Plays a central role during spermatogenesis by repressing transposable elements and preventing their mobilization, which is essential for the germline integrity. Acts via the piRNA metabolic process, which mediates the repression of transposable elements during meiosis by forming complexes composed of piRNAs and Piwi proteins and governs the methylation and subsequent repression of transposons. Its association with pi-bodies suggests a participation in the primary piRNAs metabolic process. Required prior to the pachytene stage to facilitate the production of multiple types of piRNAs, including those associated with repeats involved in the regulation of retrotransposons. May act by mediating protein-protein interactions during germ cell maturation. This is Ankyrin repeat, SAM and basic leucine zipper domain-containing protein 1 (ASZ1) from Equus caballus (Horse).